The chain runs to 4912 residues: Probable E3 ubiquitin-protein ligase HERC2 (4912 aa).

Residues 1 to 67 are disordered; sequence MFNRQASGGA…GSGSAAPPSH (67 aa). Residues 8–17 are compositionally biased toward gly residues; sequence GGAGSSGQGA. Residues 18–31 show a composition bias toward low complexity; it reads GSSQTASAAPVSAG. Composition is skewed to gly residues over residues 32–41 and 49–59; these read VGVGGGGGAS and SAAGSGSGSGS. 5 RCC1 repeats span residues 634-685, 686-739, 741-789, 791-843, and 844-897; these read NHNA…AITC, GGNL…ALTS, GLVF…ALSS, GQLY…ALSS, and SGEV…VWTQ. 3 disordered regions span residues 1102–1129, 1428–1475, and 1659–1681; these read RLSP…STSP, QLLQ…PGRG, and QEQE…EEET. Polar residues predominate over residues 1446-1458; that stretch reads SHSCHSTAGNTPT. T1776 bears the Phosphothreonine mark. The region spanning 1917–1990 is the MIB/HERC2 domain; it reads SGPDLAKLMK…QYDLQLADSA (74 aa). Disordered stretches follow at residues 1994–2018 and 2381–2412; these read ASPT…SHPS and GSIY…SGSG. Residues 2396–2412 show a composition bias toward polar residues; the sequence is ESQQPGEQDQQLSSGSG. The 47-residue stretch at 2511–2557 folds into the UBA domain; the sequence is ATDAQLIGQIMEMGFTRRTVELALKQLSLQAEIMPTPEQIVQWILEH. Residues 2572 to 2620 form a disordered region; that stretch reads LASSASSHDPEADSDNECPSSNSTTSSSTSSDTVEGQPMAVSGPAPPVK. Residues 2591–2604 are compositionally biased toward low complexity; sequence SSNSTTSSSTSSDT. In terms of domain architecture, CPH spans 2624 to 2699; that stretch reads RKDFQTADLY…VCFVHIELVE (76 aa). The region spanning 2780-2958 is the DOC domain; that stretch reads TSATLPSLGD…FLASEYSAGV (179 aa). 7 RCC1 repeats span residues 2985–3036, 3037–3090, 3091–3142, 3144–3194, 3197–3248, 3250–3300, and 3302–3352; these read PCTV…IVSQ, DGKV…ALTL, DGKV…AISS, GELY…TLAL, DGAV…ALTR, GEVW…AVTD, and GQVY…AWGL. Disordered stretches follow at residues 3352–3374 and 3953–4000; these read LPNA…RDPL and LPSS…EQPD. The segment covering 3974 to 3988 has biased composition (low complexity); the sequence is LNSTTSLSSSTVSNV. RCC1 repeat units follow at residues 4049–4099, 4101–4153, 4155–4205, 4207–4259, 4261–4311, 4313–4363, and 4365–4415; these read STIY…AVTP, GKLF…ALTT, GEVY…AITA, GHVL…CITD, DNVW…ALTK, GAVY…ACSD, and GEVY…ALST. An HECT domain is found at 4547–4882; it reads ALALPHRVWK…IHFCKSIDTD (336 aa). C4850 serves as the catalytic Glycyl thioester intermediate. Residues 4891-4912 form a disordered region; the sequence is EPTEATGSEDNSDLESVASHEG.

Its subcellular location is the cytoplasm. It is found in the cytoskeleton. The protein localises to the microtubule organizing center. The protein resides in the centrosome. It localises to the centriole. It carries out the reaction S-ubiquitinyl-[E2 ubiquitin-conjugating enzyme]-L-cysteine + [acceptor protein]-L-lysine = [E2 ubiquitin-conjugating enzyme]-L-cysteine + N(6)-ubiquitinyl-[acceptor protein]-L-lysine.. It participates in protein modification; protein ubiquitination. Probable E3 ubiquitin-protein ligase which accepts ubiquitin from an E2 ubiquitin-conjugating enzyme in the form of a thioester and then directly transfers the ubiquitin to targeted substrates. This chain is Probable E3 ubiquitin-protein ligase HERC2 (HERC2), found in Drosophila melanogaster (Fruit fly).